Consider the following 146-residue polypeptide: Cytochrome c oxidase subunit 5A, mitochondrial (146 aa).

Residues 1–37 (MLAAALRRCTAAAAARGLLHPVSAPSPAAAVCSIRCY) constitute a mitochondrion transit peptide. The SIFI-degron motif lies at 2 to 16 (LAAALRRCTAAAAAR). N6-acetyllysine occurs at positions 83 and 109. Thr137 bears the Phosphothreonine mark.

As to quaternary structure, component of the cytochrome c oxidase (complex IV, CIV), a multisubunit enzyme composed of 14 subunits. The complex is composed of a catalytic core of 3 subunits MT-CO1, MT-CO2 and MT-CO3, encoded in the mitochondrial DNA, and 11 supernumerary subunits COX4I, COX5A, COX5B, COX6A, COX6B, COX6C, COX7A, COX7B, COX7C, COX8 and NDUFA4, which are encoded in the nuclear genome. The complex exists as a monomer or a dimer and forms supercomplexes (SCs) in the inner mitochondrial membrane with NADH-ubiquinone oxidoreductase (complex I, CI) and ubiquinol-cytochrome c oxidoreductase (cytochrome b-c1 complex, complex III, CIII), resulting in different assemblies (supercomplex SCI(1)III(2)IV(1) and megacomplex MCI(2)III(2)IV(2)). Interacts with AFG1L. Interacts with RAB5IF. In response to mitochondrial stress, the precursor protein is ubiquitinated by the SIFI complex in the cytoplasm before mitochondrial import, leading to its degradation. Within the SIFI complex, UBR4 initiates ubiquitin chain that are further elongated or branched by KCMF1. Expressed in the head of epididymal sperm but not in testicular sperm (at protein level).

The protein localises to the mitochondrion inner membrane. It participates in energy metabolism; oxidative phosphorylation. Component of the cytochrome c oxidase, the last enzyme in the mitochondrial electron transport chain which drives oxidative phosphorylation. The respiratory chain contains 3 multisubunit complexes succinate dehydrogenase (complex II, CII), ubiquinol-cytochrome c oxidoreductase (cytochrome b-c1 complex, complex III, CIII) and cytochrome c oxidase (complex IV, CIV), that cooperate to transfer electrons derived from NADH and succinate to molecular oxygen, creating an electrochemical gradient over the inner membrane that drives transmembrane transport and the ATP synthase. Cytochrome c oxidase is the component of the respiratory chain that catalyzes the reduction of oxygen to water. Electrons originating from reduced cytochrome c in the intermembrane space (IMS) are transferred via the dinuclear copper A center (CU(A)) of subunit 2 and heme A of subunit 1 to the active site in subunit 1, a binuclear center (BNC) formed by heme A3 and copper B (CU(B)). The BNC reduces molecular oxygen to 2 water molecules using 4 electrons from cytochrome c in the IMS and 4 protons from the mitochondrial matrix. This is Cytochrome c oxidase subunit 5A, mitochondrial (Cox5a) from Rattus norvegicus (Rat).